The sequence spans 581 residues: uncharacterized protein (581 aa).

Residues 1 to 28 (MDSKAVSPLIGFVLMLAIIMGLIGIMQA) form the signal peptide.

This is an uncharacterized protein from Archaeoglobus fulgidus (strain ATCC 49558 / DSM 4304 / JCM 9628 / NBRC 100126 / VC-16).